The following is a 206-amino-acid chain: Urease accessory protein UreG (206 aa).

GTP is bound at residue 15 to 22 (GPVGSGKT).

The protein belongs to the SIMIBI class G3E GTPase family. UreG subfamily. As to quaternary structure, homodimer. UreD, UreF and UreG form a complex that acts as a GTP-hydrolysis-dependent molecular chaperone, activating the urease apoprotein by helping to assemble the nickel containing metallocenter of UreC. The UreE protein probably delivers the nickel.

The protein localises to the cytoplasm. Facilitates the functional incorporation of the urease nickel metallocenter. This process requires GTP hydrolysis, probably effectuated by UreG. The sequence is that of Urease accessory protein UreG from Ralstonia pickettii (strain 12J).